The chain runs to 334 residues: Serine/Arginine-related protein 53 (334 aa).

A compositionally biased stretch (basic and acidic residues) spans 1–13 (MGRRSSDTEEESR). Disordered regions lie at residues 1–179 (MGRR…HLPP), 201–220 (LKAK…EDQA), and 243–290 (QTFR…SIPT). Composition is skewed to basic residues over residues 14-24 (SKRKKKHRRRS) and 35-50 (YSRK…KSRS). The span at 51–62 (WSRDLQPRSHSY) shows a compositional bias: basic and acidic residues. Basic residues predominate over residues 78–118 (SRRKRSRSRSRGRGKSYRVQRSRSKSRTRRSRSRPRLRSHS). Basic and acidic residues-rich tracts occupy residues 132–166 (RSRD…KRGE), 201–218 (LKAK…KEED), and 247–259 (SSKE…EPSE). A coiled-coil region spans residues 180 to 236 (AEQAKARLQLVLEAAAKADEALKAKERNEEEAKRRKEEDQATLVEQVKRVKEIEAIE).

Interacts (via Arg/Ser-rich domain) with LUC7L3, RBM39 and RSF1. Post-translationally, phosphorylated. Widely expressed. Expressed in brain, spinal cord, cerebellum.

It localises to the nucleus. Its subcellular location is the nucleus speckle. It is found in the cytoplasm. Functionally, has a role in alternative splicing and transcription regulation. Involved in both constitutive and alternative pre-mRNA splicing. May have a role in the recognition of the 3' splice site during the second step of splicing. In Homo sapiens (Human), this protein is Serine/Arginine-related protein 53 (RSRC1).